The following is a 257-amino-acid chain: MLTVLSPAKRLAARPRLDLPRGLSPTSPRFQNEADELAAVARGLTAADLRRLMHISEPLARLNVARFAEFHEARTAAVPALALFDGDTYAGLEARTLDEDALRWAQDRVCILSGLYGLLRPLDLIQPHRLEMGTRLKTARGVSLYEFWGDRIALALNERATKTGARALINCASAEYFSAVDLEALSLPVISPVFLEEREGERRIVSFWAKRSRGAMARFIAENRLEHPEEILSFRAGGYAFEPDLSTDDRPVFLRTA.

Belongs to the UPF0246 family.

The protein is UPF0246 protein Rsph17025_0016 of Cereibacter sphaeroides (strain ATCC 17025 / ATH 2.4.3) (Rhodobacter sphaeroides).